The chain runs to 487 residues: Protein NEN2 (487 aa).

The Exonuclease domain maps to 18 to 179; that stretch reads FFDVETTIPF…LDDVRMNFEV (162 aa). The Mg(2+) site is built by Asp-20 and Glu-22. His-167 functions as the Proton donor/acceptor in the catalytic mechanism. Asp-172 serves as a coordination point for Mg(2+). Disordered stretches follow at residues 200–233 and 269–291; these read NSVT…TGEN and SDVP…GTGD. A compositionally biased stretch (polar residues) spans 221–233; that stretch reads PLQSPTDQQTGEN.

Mg(2+) is required as a cofactor. Expressed in the sieve elements and phloem pole pericycle cells.

The protein localises to the cytoplasm. It localises to the nucleus. Probable exonuclease involved in enuclation of sieve elements. The polypeptide is Protein NEN2 (Arabidopsis thaliana (Mouse-ear cress)).